A 130-amino-acid chain; its full sequence is D-ribose pyranase (130 aa).

His-20 acts as the Proton donor in catalysis. Substrate contacts are provided by residues Asp-28, His-97, and 119–121 (YAN).

Belongs to the RbsD / FucU family. RbsD subfamily. In terms of assembly, homodecamer.

Its subcellular location is the cytoplasm. The enzyme catalyses beta-D-ribopyranose = beta-D-ribofuranose. It participates in carbohydrate metabolism; D-ribose degradation; D-ribose 5-phosphate from beta-D-ribopyranose: step 1/2. Catalyzes the interconversion of beta-pyran and beta-furan forms of D-ribose. The polypeptide is D-ribose pyranase (Thermoanaerobacter pseudethanolicus (strain ATCC 33223 / 39E) (Clostridium thermohydrosulfuricum)).